Consider the following 511-residue polypeptide: MVLPDSNIMKNGSIKRLRDSQIENSPYSRPIKKITPNSSHEDLSATISNEGSLNFTPRTSRQESLYNMKKIFQKTYSQTKLGLFSSKKQVNTLETAIPTTPKQQLPTPTTSPEKNNILWSTPNSLTSLRTISNDLDDCRNRNLITDFSELSIINSSSSSIYSTQQSHPIFEIPEIVDNIVKQLYLIENEQDLLNGHHKKDVNRENTSTVVSCLAVSKTWNKVSKGYLMRDLKFTKSTSLTNFLSQCSTKKTTPQSLILHKMSDINNNNSRGLEIIIDPKQLRHLEYYVCPNILPPVNWFQSLTKLEKLILPGNKLINDSYLIQICRYLPNLKVLDLRACDNITDAGIVAVGTHCKQLVSCNIGRHRNGSSITGLSVVALAKNTMIRTLGLAGCDITDASMWELAQKCGKNIERLSLNNCNKLTNFSLPMLFAFNYFPNLNVLEIQNIAKITDVRHMVRYKIWKRSQRIPILIKGCDRITKLIHEEERQIKAQSLKTARKDMTLWVNQLENE.

Disordered stretches follow at residues 27-58 (YSRPIKKITPNSSHEDLSATISNEGSLNFTPR) and 99-119 (TTPKQQLPTPTTSPEKNNILW). Positions 45–58 (ATISNEGSLNFTPR) are enriched in polar residues. Positions 99–112 (TTPKQQLPTPTTSP) are enriched in low complexity.

The protein belongs to the AMN1 family.

The protein localises to the cytoplasm. It is found in the nucleus. Functionally, negative regulator of the mitotic exit network (MEN), required for multiple cell cycle checkpoints. Required for daughter cell separation and chromosome stability. Involved in copper sensitivity. This Candida glabrata (strain ATCC 2001 / BCRC 20586 / JCM 3761 / NBRC 0622 / NRRL Y-65 / CBS 138) (Yeast) protein is Antagonist of mitotic exit network protein 1 (AMN1).